The following is a 292-amino-acid chain: Phosphoribosylglycinamide formyltransferase, chloroplastic (292 aa).

Residues 1–65 constitute a chloroplast transit peptide; that stretch reads MESRVLFSSQ…KAASSTPQIV (65 aa). Residue 88–90 coordinates N(1)-(5-phospho-beta-D-ribosyl)glycinamide; it reads GSN. (6R)-10-formyltetrahydrofolate-binding positions include 167–170 and Asn184; that span reads LKLI. His186 serves as the catalytic Proton donor. Asp227 contacts (6R)-10-formyltetrahydrofolate. Residue Glu256 coordinates N(1)-(5-phospho-beta-D-ribosyl)glycinamide.

It belongs to the GART family.

The protein localises to the plastid. Its subcellular location is the chloroplast. It carries out the reaction N(1)-(5-phospho-beta-D-ribosyl)glycinamide + (6R)-10-formyltetrahydrofolate = N(2)-formyl-N(1)-(5-phospho-beta-D-ribosyl)glycinamide + (6S)-5,6,7,8-tetrahydrofolate + H(+). It participates in purine metabolism; IMP biosynthesis via de novo pathway; N(2)-formyl-N(1)-(5-phospho-D-ribosyl)glycinamide from N(1)-(5-phospho-D-ribosyl)glycinamide (10-formyl THF route): step 1/1. This Arabidopsis thaliana (Mouse-ear cress) protein is Phosphoribosylglycinamide formyltransferase, chloroplastic (PUR3).